The following is a 231-amino-acid chain: 5'-methylthioadenosine/S-adenosylhomocysteine nucleosidase (231 aa).

The active-site Proton acceptor is E12. Residues G78, V153, and 174-175 (ME) each bind substrate. The active-site Proton donor is D198.

Belongs to the PNP/UDP phosphorylase family. MtnN subfamily.

The enzyme catalyses S-adenosyl-L-homocysteine + H2O = S-(5-deoxy-D-ribos-5-yl)-L-homocysteine + adenine. It carries out the reaction S-methyl-5'-thioadenosine + H2O = 5-(methylsulfanyl)-D-ribose + adenine. The catalysed reaction is 5'-deoxyadenosine + H2O = 5-deoxy-D-ribose + adenine. The protein operates within amino-acid biosynthesis; L-methionine biosynthesis via salvage pathway; S-methyl-5-thio-alpha-D-ribose 1-phosphate from S-methyl-5'-thioadenosine (hydrolase route): step 1/2. Its function is as follows. Catalyzes the irreversible cleavage of the glycosidic bond in both 5'-methylthioadenosine (MTA) and S-adenosylhomocysteine (SAH/AdoHcy) to adenine and the corresponding thioribose, 5'-methylthioribose and S-ribosylhomocysteine, respectively. Also cleaves 5'-deoxyadenosine, a toxic by-product of radical S-adenosylmethionine (SAM) enzymes, into 5-deoxyribose and adenine. This chain is 5'-methylthioadenosine/S-adenosylhomocysteine nucleosidase, found in Aliivibrio salmonicida (strain LFI1238) (Vibrio salmonicida (strain LFI1238)).